We begin with the raw amino-acid sequence, 696 residues long: Methionine--tRNA ligase (696 aa).

The 'HIGH' region motif lies at 12-22 (PYANGPLHLGH). Residues cysteine 143, cysteine 146, cysteine 156, and cysteine 159 each coordinate Zn(2+). Positions 330–334 (KMSKS) match the 'KMSKS' region motif. Lysine 333 provides a ligand contact to ATP. The tRNA-binding domain occupies 593 to 696 (DFAKLDLRIG…AGAQPGMPVR (104 aa)).

This sequence belongs to the class-I aminoacyl-tRNA synthetase family. MetG type 1 subfamily. Homodimer. It depends on Zn(2+) as a cofactor.

The protein localises to the cytoplasm. The enzyme catalyses tRNA(Met) + L-methionine + ATP = L-methionyl-tRNA(Met) + AMP + diphosphate. In terms of biological role, is required not only for elongation of protein synthesis but also for the initiation of all mRNA translation through initiator tRNA(fMet) aminoacylation. This chain is Methionine--tRNA ligase, found in Xanthomonas campestris pv. campestris (strain 8004).